The following is a 649-amino-acid chain: 2-hydroxyacyl-CoA lyase 2 (649 aa).

A helical transmembrane segment spans residues 2-21 (FHLIPFVVAFLLVFLTWFLI). Residue glutamate 84 participates in thiamine diphosphate binding. A thiamine pyrophosphate binding region spans residues 474–554 (DFVGSAAYIL…AIGVIGNDAC (81 aa)). Residues aspartate 525 and asparagine 551 each contribute to the Mg(2+) site.

The protein belongs to the TPP enzyme family. It depends on Mg(2+) as a cofactor. Requires thiamine diphosphate as cofactor.

The protein localises to the endoplasmic reticulum membrane. The catalysed reaction is 2-hydroxyoctadecanoyl-CoA = heptadecanal + formyl-CoA. The enzyme catalyses (2R)-hydroxyhexadecanoyl-CoA = pentadecanal + formyl-CoA. Its function is as follows. Endoplasmic reticulum 2-OH acyl-CoA lyase involved in the cleavage (C1 removal) reaction in the fatty acid alpha-oxydation in a thiamine pyrophosphate (TPP)-dependent manner. Involved in the phytosphingosine degradation pathway. The protein is 2-hydroxyacyl-CoA lyase 2 (ilvbl) of Xenopus laevis (African clawed frog).